Here is a 193-residue protein sequence, read N- to C-terminus: A-type ATP synthase subunit E (193 aa).

The protein belongs to the V-ATPase E subunit family. In terms of assembly, has multiple subunits with at least A(3), B(3), C, D, E, F, H, I and proteolipid K(x).

Its subcellular location is the cell membrane. Functionally, component of the A-type ATP synthase that produces ATP from ADP in the presence of a proton gradient across the membrane. This is A-type ATP synthase subunit E from Haloquadratum walsbyi (strain DSM 16790 / HBSQ001).